The following is a 159-amino-acid chain: Large ribosomal subunit protein uL11 (159 aa).

This sequence belongs to the universal ribosomal protein uL11 family. Part of the ribosomal stalk of the 50S ribosomal subunit. Interacts with L10 and the large rRNA to form the base of the stalk. L10 forms an elongated spine to which L12 dimers bind in a sequential fashion forming a multimeric L10(L12)X complex.

In terms of biological role, forms part of the ribosomal stalk which helps the ribosome interact with GTP-bound translation factors. The chain is Large ribosomal subunit protein uL11 from Methanococcus maripaludis (strain DSM 14266 / JCM 13030 / NBRC 101832 / S2 / LL).